The sequence spans 129 residues: Large ribosomal subunit protein bL12 (129 aa).

It belongs to the bacterial ribosomal protein bL12 family. Homodimer. Part of the ribosomal stalk of the 50S ribosomal subunit. Forms a multimeric L10(L12)X complex, where L10 forms an elongated spine to which 2 to 4 L12 dimers bind in a sequential fashion. Binds GTP-bound translation factors.

Its function is as follows. Forms part of the ribosomal stalk which helps the ribosome interact with GTP-bound translation factors. Is thus essential for accurate translation. In Protochlamydia amoebophila (strain UWE25), this protein is Large ribosomal subunit protein bL12.